Consider the following 459-residue polypeptide: ATP-dependent 6-phosphofructokinase (459 aa).

ATP-binding positions include G89, 154–155, and 179–182; these read RG and GDGG. Residue D180 coordinates Mg(2+). Residues 208–210, 253–255, E309, and 368–371 contribute to the substrate site; these read TID, MGR, and YAIR. D210 serves as the catalytic Proton acceptor.

This sequence belongs to the phosphofructokinase type A (PFKA) family. PPi-dependent PFK group II subfamily. Atypical ATP-dependent clade 'X' sub-subfamily. Homodimer. It depends on Mg(2+) as a cofactor.

The protein localises to the cytoplasm. The catalysed reaction is beta-D-fructose 6-phosphate + ATP = beta-D-fructose 1,6-bisphosphate + ADP + H(+). Its pathway is carbohydrate degradation; glycolysis; D-glyceraldehyde 3-phosphate and glycerone phosphate from D-glucose: step 3/4. Its activity is regulated as follows. AMP causes 20-40% inhibition and diphosphate causes 20-50% inhibition. ADP, citrate, PEP and FBP have no effect. Functionally, catalyzes the phosphorylation of D-fructose 6-phosphate to fructose 1,6-bisphosphate by ATP, the first committing step of glycolysis. This is ATP-dependent 6-phosphofructokinase from Amycolatopsis methanolica.